A 158-amino-acid polypeptide reads, in one-letter code: Deoxyuridine 5'-triphosphate nucleotidohydrolase (158 aa).

Residues 75–77 (RSG), Asn88, 92–94 (TVD), and Lys102 contribute to the substrate site.

This sequence belongs to the dUTPase family. The cofactor is Mg(2+).

The catalysed reaction is dUTP + H2O = dUMP + diphosphate + H(+). Its pathway is pyrimidine metabolism; dUMP biosynthesis; dUMP from dCTP (dUTP route): step 2/2. Functionally, this enzyme is involved in nucleotide metabolism: it produces dUMP, the immediate precursor of thymidine nucleotides and it decreases the intracellular concentration of dUTP so that uracil cannot be incorporated into DNA. This Bifidobacterium longum (strain DJO10A) protein is Deoxyuridine 5'-triphosphate nucleotidohydrolase.